A 131-amino-acid polypeptide reads, in one-letter code: Peptide methionine sulfoxide reductase MsrB (131 aa).

The MsrB domain occupies 8 to 130 (LDEWRSMLDP…NSVCIDLRPR (123 aa)). Zn(2+) contacts are provided by cysteine 47, cysteine 50, cysteine 96, and cysteine 99. Residue cysteine 119 is the Nucleophile of the active site.

The protein belongs to the MsrB Met sulfoxide reductase family. Requires Zn(2+) as cofactor.

The catalysed reaction is L-methionyl-[protein] + [thioredoxin]-disulfide + H2O = L-methionyl-(R)-S-oxide-[protein] + [thioredoxin]-dithiol. This chain is Peptide methionine sulfoxide reductase MsrB, found in Pseudomonas putida (strain GB-1).